The primary structure comprises 500 residues: Glycerol kinase (500 aa).

An ADP-binding site is contributed by Thr15. The ATP site is built by Thr15, Thr16, and Ser17. Position 15 (Thr15) interacts with sn-glycerol 3-phosphate. Arg19 is an ADP binding site. Positions 85, 86, 137, and 245 each coordinate sn-glycerol 3-phosphate. Glycerol is bound by residues Arg85, Glu86, Tyr137, Asp245, and Gln246. Positions 267 and 310 each coordinate ADP. The ATP site is built by Thr267, Gly310, Gln314, and Gly411. Positions 411 and 415 each coordinate ADP.

This sequence belongs to the FGGY kinase family.

The catalysed reaction is glycerol + ATP = sn-glycerol 3-phosphate + ADP + H(+). It functions in the pathway polyol metabolism; glycerol degradation via glycerol kinase pathway; sn-glycerol 3-phosphate from glycerol: step 1/1. Inhibited by fructose 1,6-bisphosphate (FBP). Its function is as follows. Key enzyme in the regulation of glycerol uptake and metabolism. Catalyzes the phosphorylation of glycerol to yield sn-glycerol 3-phosphate. The protein is Glycerol kinase of Aeromonas hydrophila subsp. hydrophila (strain ATCC 7966 / DSM 30187 / BCRC 13018 / CCUG 14551 / JCM 1027 / KCTC 2358 / NCIMB 9240 / NCTC 8049).